Reading from the N-terminus, the 138-residue chain is Large ribosomal subunit protein uL14 (138 aa).

It belongs to the universal ribosomal protein uL14 family. Part of the 50S ribosomal subunit. Forms a cluster with proteins L3 and L24e, part of which may contact the 16S rRNA in 2 intersubunit bridges.

Binds to 23S rRNA. Forms part of two intersubunit bridges in the 70S ribosome. In Sulfurisphaera tokodaii (strain DSM 16993 / JCM 10545 / NBRC 100140 / 7) (Sulfolobus tokodaii), this protein is Large ribosomal subunit protein uL14.